A 239-amino-acid polypeptide reads, in one-letter code: Ribonuclease Le2 (239 aa).

Cystine bridges form between Cys-5–Cys-22, Cys-13–Cys-58, Cys-21–Cys-126, Cys-66–Cys-118, and Cys-191–Cys-225. Active-site residues include His-51, Glu-111, and His-115.

This sequence belongs to the RNase T2 family.

The enzyme catalyses a ribonucleotidyl-ribonucleotide-RNA + H2O = a 3'-end 3'-phospho-ribonucleotide-RNA + a 5'-end dephospho-ribonucleoside-RNA + H(+). In terms of biological role, this is a base non-specific and adenylic acid preferential ribonuclease. The polypeptide is Ribonuclease Le2 (Lentinula edodes (Shiitake mushroom)).